Here is a 475-residue protein sequence, read N- to C-terminus: Aspartyl/glutamyl-tRNA(Asn/Gln) amidotransferase subunit B (475 aa).

Belongs to the GatB/GatE family. GatB subfamily. In terms of assembly, heterotrimer of A, B and C subunits.

It carries out the reaction L-glutamyl-tRNA(Gln) + L-glutamine + ATP + H2O = L-glutaminyl-tRNA(Gln) + L-glutamate + ADP + phosphate + H(+). It catalyses the reaction L-aspartyl-tRNA(Asn) + L-glutamine + ATP + H2O = L-asparaginyl-tRNA(Asn) + L-glutamate + ADP + phosphate + 2 H(+). Its function is as follows. Allows the formation of correctly charged Asn-tRNA(Asn) or Gln-tRNA(Gln) through the transamidation of misacylated Asp-tRNA(Asn) or Glu-tRNA(Gln) in organisms which lack either or both of asparaginyl-tRNA or glutaminyl-tRNA synthetases. The reaction takes place in the presence of glutamine and ATP through an activated phospho-Asp-tRNA(Asn) or phospho-Glu-tRNA(Gln). This chain is Aspartyl/glutamyl-tRNA(Asn/Gln) amidotransferase subunit B, found in Macrococcus caseolyticus (strain JCSC5402) (Macrococcoides caseolyticum).